The primary structure comprises 588 residues: Histone-arginine methyltransferase CARM1 (588 aa).

The SAM-dependent MTase PRMT-type domain occupies 120 to 427; sequence AVQYFQFYGY…KRQSYDISIV (308 aa). Residues glutamine 133, arginine 142, glycine 166, glutamate 188, glutamate 217, and serine 245 each contribute to the S-adenosyl-L-methionine site. Positions 473–588 are transactivation domain; it reads TGGTYSMSQG…IPSNTMHYGS (116 aa).

This sequence belongs to the class I-like SAM-binding methyltransferase superfamily. Protein arginine N-methyltransferase family. Homodimer.

The protein localises to the nucleus. It localises to the cytoplasm. It is found in the chromosome. It carries out the reaction L-arginyl-[protein] + 2 S-adenosyl-L-methionine = N(omega),N(omega)-dimethyl-L-arginyl-[protein] + 2 S-adenosyl-L-homocysteine + 2 H(+). Its function is as follows. Methylates (mono- and asymmetric dimethylation) the guanidino nitrogens of arginyl residues in several proteins involved in DNA packaging, transcription regulation, pre-mRNA splicing, and mRNA stability. Recruited to promoters upon gene activation together with histone acetyltransferases from EP300/P300 and p160 families, methylates histone H3 at 'Arg-17' (H3R17me) and activates transcription via chromatin remodeling. The polypeptide is Histone-arginine methyltransferase CARM1 (carm1) (Danio rerio (Zebrafish)).